A 126-amino-acid chain; its full sequence is Large ribosomal subunit protein bL17 (126 aa).

The protein belongs to the bacterial ribosomal protein bL17 family. As to quaternary structure, part of the 50S ribosomal subunit. Contacts protein L32.

In Lawsonia intracellularis (strain PHE/MN1-00), this protein is Large ribosomal subunit protein bL17.